A 287-amino-acid polypeptide reads, in one-letter code: Phosphatidylglycerol--prolipoprotein diacylglyceryl transferase (287 aa).

4 helical membrane-spanning segments follow: residues 15-35 (IGPL…ILAI), 55-75 (FVMF…VFFE), 90-110 (IWEG…TAIV), and 117-137 (VSFW…QAIG). Arg-138 contacts a 1,2-diacyl-sn-glycero-3-phospho-(1'-sn-glycerol). 2 helical membrane passes run 180–200 (HPTF…LLLL) and 238–258 (IIRT…IFII).

It belongs to the Lgt family.

The protein localises to the cell membrane. It catalyses the reaction L-cysteinyl-[prolipoprotein] + a 1,2-diacyl-sn-glycero-3-phospho-(1'-sn-glycerol) = an S-1,2-diacyl-sn-glyceryl-L-cysteinyl-[prolipoprotein] + sn-glycerol 1-phosphate + H(+). It functions in the pathway protein modification; lipoprotein biosynthesis (diacylglyceryl transfer). Its function is as follows. Catalyzes the transfer of the diacylglyceryl group from phosphatidylglycerol to the sulfhydryl group of the N-terminal cysteine of a prolipoprotein, the first step in the formation of mature lipoproteins. The chain is Phosphatidylglycerol--prolipoprotein diacylglyceryl transferase from Oceanobacillus iheyensis (strain DSM 14371 / CIP 107618 / JCM 11309 / KCTC 3954 / HTE831).